The sequence spans 476 residues: Protein THYLAKOID RHODANESE-LIKE, chloroplastic (476 aa).

Residues 1–21 (MAATTTILSSAAPTPLTAPPR) constitute a chloroplast transit peptide. The disordered stretch occupies residues 1-29 (MAATTTILSSAAPTPLTAPPRARARAPAA). Low complexity predominate over residues 11 to 21 (AAPTPLTAPPR). A thylakoid-targeting transit peptide spans 22–58 (ARARAPAARRRRLRARDILGAALGLANGGASAALAAP). A helical membrane pass occupies residues 100–120 (LVAAAGVAAVALPLVLAQVLG). In terms of domain architecture, Rhodanese spans 140-246 (EEPGAQLVDI…WLSSSLPWTA (107 aa)). Transmembrane regions (helical) follow at residues 264–284 (LPVTLGLAAATGLGILAYTEI) and 287–307 (VLQFLGSAAIVQLVASKLIYA). Positions 342-476 (LPSTGTKSQP…PPSSPSPSAP (135 aa)) are disordered. Positions 351–389 (PAITEAAPATAEAAPAAATATAAPPAAPVEETSTEAAPA) are enriched in low complexity. Residues 403–412 (LKPPSSPSPL) are compositionally biased toward pro residues. Low complexity predominate over residues 425–446 (ESAATESAPAVNSAPVAEAAPE). Residues 447–476 (AAPPAAPRPLSPYPNYPDLKPPSSPSPSAP) show a composition bias toward pro residues.

Component of high molecular weight thylakoid LFNRs-containing protein complexes containing LIR1, LFNR1, LFNR2, TIC62 and TROL proteins.

It localises to the plastid. It is found in the chloroplast thylakoid membrane. In terms of biological role, rhodanese domain-containing protein required for anchoring ferredoxin--NADP reductase to the thylakoid membranes and sustaining efficient linear electron flow (LEF). The sequence is that of Protein THYLAKOID RHODANESE-LIKE, chloroplastic from Oryza sativa subsp. indica (Rice).